Reading from the N-terminus, the 68-residue chain is Small integral membrane protein 10-like protein 3 (68 aa).

Expressed specifically in salivary glands (at protein level).

This Mus musculus (Mouse) protein is Small integral membrane protein 10-like protein 3.